Consider the following 210-residue polypeptide: Pyridoxine/pyridoxamine 5'-phosphate oxidase (210 aa).

Substrate-binding positions include Arg7–Tyr10 and Lys65. FMN is bound by residues Arg60–Lys65, Phe75–Thr76, Arg81, Lys82, and Gln104. Substrate-binding residues include Tyr122, Arg126, and Ser130. Residues Gln139–Ser140 and Trp183 each bind FMN. Position 189–191 (Arg189–His191) interacts with substrate. Arg193 lines the FMN pocket.

This sequence belongs to the pyridoxamine 5'-phosphate oxidase family. Homodimer. It depends on FMN as a cofactor.

The catalysed reaction is pyridoxamine 5'-phosphate + O2 + H2O = pyridoxal 5'-phosphate + H2O2 + NH4(+). It carries out the reaction pyridoxine 5'-phosphate + O2 = pyridoxal 5'-phosphate + H2O2. The protein operates within cofactor metabolism; pyridoxal 5'-phosphate salvage; pyridoxal 5'-phosphate from pyridoxamine 5'-phosphate: step 1/1. It functions in the pathway cofactor metabolism; pyridoxal 5'-phosphate salvage; pyridoxal 5'-phosphate from pyridoxine 5'-phosphate: step 1/1. Catalyzes the oxidation of either pyridoxine 5'-phosphate (PNP) or pyridoxamine 5'-phosphate (PMP) into pyridoxal 5'-phosphate (PLP). The chain is Pyridoxine/pyridoxamine 5'-phosphate oxidase from Neisseria meningitidis serogroup A / serotype 4A (strain DSM 15465 / Z2491).